A 421-amino-acid chain; its full sequence is Diaminopimelate decarboxylase (421 aa).

Lysine 63 is subject to N6-(pyridoxal phosphate)lysine. Residues glycine 242 and 278-281 (EPGR) each bind pyridoxal 5'-phosphate. The substrate site is built by arginine 281, arginine 317, and tyrosine 321. Cysteine 346 (proton donor) is an active-site residue. The substrate site is built by glutamate 347 and tyrosine 375. Tyrosine 375 provides a ligand contact to pyridoxal 5'-phosphate.

The protein belongs to the Orn/Lys/Arg decarboxylase class-II family. LysA subfamily. Homodimer. Requires pyridoxal 5'-phosphate as cofactor.

The enzyme catalyses meso-2,6-diaminopimelate + H(+) = L-lysine + CO2. The protein operates within amino-acid biosynthesis; L-lysine biosynthesis via DAP pathway; L-lysine from DL-2,6-diaminopimelate: step 1/1. Specifically catalyzes the decarboxylation of meso-diaminopimelate (meso-DAP) to L-lysine. This is Diaminopimelate decarboxylase from Zymomonas mobilis subsp. mobilis (strain ATCC 31821 / ZM4 / CP4).